A 250-amino-acid chain; its full sequence is UPF0014 membrane protein YjkA (250 aa).

6 consecutive transmembrane segments (helical) span residues 3 to 23, 32 to 52, 57 to 77, 91 to 111, 117 to 137, and 214 to 234; these read YLSLSLTMIFVLIALFLSKSF, IIATIRAAVQLLIIGYVLSLI, HPVFILLMVLLMLAVAAQNVI, FAALAIVEIVTQGILLSLHII, YVIPISGMVIGNSMVLSSLFL, and LLIVFTTMASAALTCVILSVL.

It belongs to the UPF0014 family.

It localises to the cell membrane. The protein is UPF0014 membrane protein YjkA (yjkA) of Bacillus subtilis (strain 168).